Here is a 213-residue protein sequence, read N- to C-terminus: uncharacterized protein (213 aa).

The segment covering 1-14 (MSSDVLVTTPAQRQ) has biased composition (polar residues). Positions 1-26 (MSSDVLVTTPAQRQTEPHAEAVSRNR) are disordered. The 61-residue stretch at 29 to 89 (QATFRKVLAA…EVYLDLVRQV (61 aa)) folds into the HTH tetR-type domain.

This is an uncharacterized protein from Mycobacterium tuberculosis (strain CDC 1551 / Oshkosh).